A 260-amino-acid chain; its full sequence is Ribosomal RNA small subunit methyltransferase J (260 aa).

S-adenosyl-L-methionine is bound by residues 108-109 (RD), 124-125 (ER), and aspartate 178.

The protein belongs to the methyltransferase superfamily. RsmJ family.

Its subcellular location is the cytoplasm. The enzyme catalyses guanosine(1516) in 16S rRNA + S-adenosyl-L-methionine = N(2)-methylguanosine(1516) in 16S rRNA + S-adenosyl-L-homocysteine + H(+). Its function is as follows. Specifically methylates the guanosine in position 1516 of 16S rRNA. The chain is Ribosomal RNA small subunit methyltransferase J from Ectopseudomonas mendocina (strain ymp) (Pseudomonas mendocina).